Consider the following 352-residue polypeptide: uncharacterized protein (352 aa).

The protein to Synechocystis PCC 6803 slr0039.

This is an uncharacterized protein from Archaeoglobus fulgidus (strain ATCC 49558 / DSM 4304 / JCM 9628 / NBRC 100126 / VC-16).